Reading from the N-terminus, the 65-residue chain is uncharacterized protein (65 aa).

Positions 1 to 30 (MPAASLESLLPPPPGKLPSPPLRPHGKFQR) are disordered. A compositionally biased stretch (pro residues) spans 10–23 (LPPPPGKLPSPPLR).

This is an uncharacterized protein from Homo sapiens (Human).